The primary structure comprises 151 residues: UPF0178 protein YaiI (151 aa).

This sequence belongs to the UPF0178 family.

This chain is UPF0178 protein YaiI, found in Salmonella enteritidis PT4 (strain P125109).